Consider the following 128-residue polypeptide: UPF0325 protein YaeH (128 aa).

Belongs to the UPF0325 family.

The polypeptide is UPF0325 protein YaeH (Escherichia coli (strain ATCC 8739 / DSM 1576 / NBRC 3972 / NCIMB 8545 / WDCM 00012 / Crooks)).